We begin with the raw amino-acid sequence, 119 residues long: Large ribosomal subunit protein uL22c (119 aa).

It belongs to the universal ribosomal protein uL22 family. In terms of assembly, part of the 50S ribosomal subunit.

The protein resides in the plastid. It is found in the chloroplast. Functionally, this protein binds specifically to 23S rRNA. In terms of biological role, the globular domain of the protein is located near the polypeptide exit tunnel on the outside of the subunit, while an extended beta-hairpin is found that lines the wall of the exit tunnel in the center of the 70S ribosome. In Chaetosphaeridium globosum (Charophycean green alga), this protein is Large ribosomal subunit protein uL22c (rpl22).